We begin with the raw amino-acid sequence, 465 residues long: Cysteine--tRNA ligase (465 aa).

Cys30 is a Zn(2+) binding site. The 'HIGH' region motif lies at 32–42; that stretch reads ITVYDYCHIGH. Residues Cys214, His239, and Glu243 each contribute to the Zn(2+) site. Residues 271–275 carry the 'KMSKS' region motif; the sequence is KMSKS. Residue Lys274 coordinates ATP.

Belongs to the class-I aminoacyl-tRNA synthetase family. As to quaternary structure, monomer. The cofactor is Zn(2+).

The protein resides in the cytoplasm. The catalysed reaction is tRNA(Cys) + L-cysteine + ATP = L-cysteinyl-tRNA(Cys) + AMP + diphosphate. The sequence is that of Cysteine--tRNA ligase from Burkholderia thailandensis (strain ATCC 700388 / DSM 13276 / CCUG 48851 / CIP 106301 / E264).